Consider the following 770-residue polypeptide: Potassium transporter 25 (770 aa).

The Cytoplasmic portion of the chain corresponds to 1 to 23 (MDLEAAHGAAAAPGKRRRRARES). A helical membrane pass occupies residues 24–44 (WGASLLLAYQSLGVVYGDVAT). Residues 45–70 (SPLYVYKSAFAGDDIQHSAGNEEIYG) lie on the Extracellular side of the membrane. The helical transmembrane segment at 71–91 (VLSFVFWTLTLISLVKYVLIV) threads the bilayer. Residues 92–152 (LRADDGGEGG…MLERYRVLQR (61 aa)) are Cytoplasmic-facing. The chain crosses the membrane as a helical span at residues 153-173 (LLLLFALLGTCMVIGDGVLTP). The Extracellular portion of the chain corresponds to 174-194 (AVSVYSAVSGLELSMEHEHHK). Residues 195 to 215 (YVQLPVTCAILIGLFALQHYG) form a helical membrane-spanning segment. The Cytoplasmic portion of the chain corresponds to 216-218 (THR). The chain crosses the membrane as a helical span at residues 219-239 (VGFIFAPIVCVWLLCISAIGV). Residues 240–267 (YNIVHWNHHVYRALSPYYMYQFLKKTQT) lie on the Extracellular side of the membrane. The helical transmembrane segment at 268-288 (GGWMSLGGILLCVTGSEAMYA) threads the bilayer. Residues 289–299 (DLGHFSQSSIK) are Cytoplasmic-facing. The chain crosses the membrane as a helical span at residues 300 to 320 (IAFMSVVYPALVLAYMGQAAY). Over 321–346 (ISQHHSFENAYHIGFYVSVPEKLRWP) the chain is Extracellular. Residues 347–367 (VLVIAILAAVVGSQAVITGTF) traverse the membrane as a helical segment. At 368-394 (SIIKQCSSLSCFPGVKIVHTSSTVHGQ) the chain is on the cytoplasmic side. The chain crosses the membrane as a helical span at residues 395-415 (IYIPEINWILMILCLAVTLGF). Residues 416-425 (RNTKHLANAQ) are Extracellular-facing. A helical membrane pass occupies residues 426–446 (GLAVITVMLVTTCLMSLVIVL). The Cytoplasmic portion of the chain corresponds to 447 to 451 (CWNKS). A helical membrane pass occupies residues 452–472 (IFLALGFLIFFGTIEVLYFSA). The Extracellular segment spans residues 473–479 (SLVKFHE). Residues 480 to 500 (GAWVPITLSFIFMIVMCVWHY) traverse the membrane as a helical segment. Over 501 to 770 (GTIKKYEFDF…TLEVGMVYQV (270 aa)) the chain is Cytoplasmic.

This sequence belongs to the HAK/KUP transporter (TC 2.A.72.3) family.

Its subcellular location is the membrane. Its function is as follows. High-affinity potassium transporter. The protein is Potassium transporter 25 (HAK25) of Oryza sativa subsp. japonica (Rice).